The chain runs to 345 residues: 4-hydroxy-2-oxovalerate aldolase 3 (345 aa).

Residues 8 to 260 form the Pyruvate carboxyltransferase domain; sequence ITVHDMTLRD…ETGVDVWKIQ (253 aa). 16 to 17 contacts substrate; that stretch reads RD. Asp17 is a binding site for Mn(2+). The active-site Proton acceptor is His20. Ser170 and His199 together coordinate substrate. His199 and His201 together coordinate Mn(2+). Tyr290 is a substrate binding site.

Belongs to the 4-hydroxy-2-oxovalerate aldolase family.

The enzyme catalyses (S)-4-hydroxy-2-oxopentanoate = acetaldehyde + pyruvate. This chain is 4-hydroxy-2-oxovalerate aldolase 3 (aphG), found in Comamonas testosteroni (Pseudomonas testosteroni).